Reading from the N-terminus, the 215-residue chain is Ependymin-2 (215 aa).

The N-terminal stretch at 1 to 20 is a signal peptide; it reads MHTVKLLCVVFSCLCAVAWA. N-linked (GlcNAc...) asparagine glycosylation is found at Asn-71 and Asn-94.

Belongs to the ependymin family. As to quaternary structure, forms disulfide-linked dimers. In terms of processing, different glycosylation variants are known as EPD-beta and EPD-gamma. Binds calcium through the terminal sialic acids. In terms of tissue distribution, EPDs are synthesized in the meninx and secreted in the cerebrospinal fluid.

Its subcellular location is the secreted. In terms of biological role, may play a role in neural plasticity. May be involved during axon regeneration. The chain is Ependymin-2 (epd2) from Carassius auratus (Goldfish).